The chain runs to 1375 residues: DNA-directed RNA polymerase subunit beta (1375 aa).

It belongs to the RNA polymerase beta chain family. As to quaternary structure, the RNAP catalytic core consists of 2 alpha, 1 beta, 1 beta' and 1 omega subunit. When a sigma factor is associated with the core the holoenzyme is formed, which can initiate transcription.

It carries out the reaction RNA(n) + a ribonucleoside 5'-triphosphate = RNA(n+1) + diphosphate. Its function is as follows. DNA-dependent RNA polymerase catalyzes the transcription of DNA into RNA using the four ribonucleoside triphosphates as substrates. In Coxiella burnetii (strain RSA 331 / Henzerling II), this protein is DNA-directed RNA polymerase subunit beta.